A 338-amino-acid chain; its full sequence is Anthocyanidin reductase ((2S)-flavan-3-ol-forming) (338 aa).

NADP(+)-binding positions include 18–21 (TGFV), Lys48, 87–90 (VATP), and Tyr168.

The protein belongs to the NAD(P)-dependent epimerase/dehydratase family. Dihydroflavonol-4-reductase subfamily. In terms of tissue distribution, expressed in seeds, grape skins, flowers and leaves.

The enzyme catalyses a (2S,3R)-flavan-3-ol + 2 NADP(+) = an anthocyanidin with a 3-hydroxy group + 2 NADPH + 2 H(+). The catalysed reaction is a (2S,3S)-flavan-3-ol + 2 NADP(+) = an anthocyanidin with a 3-hydroxy group + 2 NADPH + 2 H(+). Its pathway is secondary metabolite biosynthesis; flavonoid biosynthesis. Its activity is regulated as follows. Inhibited at NaCl concentrations higher than 200 mM. Produces the terminal flavan-3-ol monomers required for the formation of proanthocyanidins or condensed tannins in leaves and flowers, as well as in the skin and seeds of developing berries. Behaves as a reductase and as a C-3 epimerase. Catalyzes the double reduction of anthocyanidins, producing a mixture of (2S,3S)- and (2S,3R)-flavan-3-ols. The enzyme catalyzes sequential hydride transfers to C-2 and C-4, respectively and epimerization at C-3 is achieved by tautomerization that occurs between the two hydride transfers. Converts cyanidin, pelargonidin and delphinidin into catechin and epicatechin, afzelechin and epiafzelechin, and gallocatechin and epigallocatechin respectively. The sequence is that of Anthocyanidin reductase ((2S)-flavan-3-ol-forming) from Vitis vinifera (Grape).